Consider the following 370-residue polypeptide: Cytochrome b (370 aa).

4 helical membrane passes run 25-45 (FGSMLLACLTLQLLTGFFLAV), 69-90 (WMMQNLHAIGASMFFICIYIHI), 105-125 (WLSGTTLLIMLMATAFFGYVL), and 170-190 (FFALHFILPFGIISLSSLHIL). 2 residues coordinate heme b: His-75 and His-89. The heme b site is built by His-174 and His-188. His-193 provides a ligand contact to a ubiquinone. 4 helical membrane passes run 218-238 (YKDMLMLTIMTIMLLTIVSFF), 280-300 (LGGALALXMSIMILLTLPFTH), 312-332 (FMQLTFWTFTATFLVISWTAT), and 339-358 (FTTISQVAALMYFLFFISNP).

It belongs to the cytochrome b family. As to quaternary structure, the cytochrome bc1 complex contains 3 respiratory subunits (MT-CYB, CYC1 and UQCRFS1), 2 core proteins (UQCRC1 and UQCRC2) and probably 6 low-molecular weight proteins. Requires heme b as cofactor.

The protein resides in the mitochondrion inner membrane. In terms of biological role, component of the ubiquinol-cytochrome c reductase complex (complex III or cytochrome b-c1 complex) that is part of the mitochondrial respiratory chain. The b-c1 complex mediates electron transfer from ubiquinol to cytochrome c. Contributes to the generation of a proton gradient across the mitochondrial membrane that is then used for ATP synthesis. The polypeptide is Cytochrome b (MT-CYB) (Chilabothrus exsul (Abaco Island boa)).